The chain runs to 239 residues: Purine nucleoside phosphorylase DeoD-type (239 aa).

A purine D-ribonucleoside is bound at residue His-5. Phosphate-binding positions include Gly-21, Arg-25, Arg-44, and Arg-88–Ser-91. A purine D-ribonucleoside is bound by residues Glu-180 to Glu-182 and Ser-204 to Asp-205. The active-site Proton donor is the Asp-205.

The protein belongs to the PNP/UDP phosphorylase family. Homohexamer; trimer of homodimers.

It carries out the reaction a purine D-ribonucleoside + phosphate = a purine nucleobase + alpha-D-ribose 1-phosphate. The enzyme catalyses a purine 2'-deoxy-D-ribonucleoside + phosphate = a purine nucleobase + 2-deoxy-alpha-D-ribose 1-phosphate. Its function is as follows. Catalyzes the reversible phosphorolytic breakdown of the N-glycosidic bond in the beta-(deoxy)ribonucleoside molecules, with the formation of the corresponding free purine bases and pentose-1-phosphate. This is Purine nucleoside phosphorylase DeoD-type from Citrobacter koseri (strain ATCC BAA-895 / CDC 4225-83 / SGSC4696).